The primary structure comprises 659 residues: MYLKEGCSLLLKVQKPLIPFVLNTNLNVNHLLTESPNHAEIKELDVVKRLRQESCVPLALHFFKSIANSNLFKHTPLTFEVMIRKLAMDGQVDSVQYLLQQMKLQGFHCSEDLFISVISVYRQVGLAERAVEMFYRIKEFGCDPSVKIYNHVLDTLLGENRIQMIYMVYRDMKRDGFEPNVFTYNVLLKALCKNNKVDGAKKLLVEMSNKGCCPDAVSYTTVISSMCEVGLVKEGRELAERFEPVVSVYNALINGLCKEHDYKGAFELMREMVEKGISPNVISYSTLINVLCNSGQIELAFSFLTQMLKRGCHPNIYTLSSLVKGCFLRGTTFDALDLWNQMIRGFGLQPNVVAYNTLVQGFCSHGNIVKAVSVFSHMEEIGCSPNIRTYGSLINGFAKRGSLDGAVYIWNKMLTSGCCPNVVVYTNMVEALCRHSKFKEAESLIEIMSKENCAPSVPTFNAFIKGLCDAGRLDWAEKVFRQMEQQHRCPPNIVTYNELLDGLAKANRIEEAYGLTREIFMRGVEWSSSTYNTLLHGSCNAGLPGIALQLVGKMMVDGKSPDEITMNMIILAYCKQGKAERAAQMLDLVSCGRRKWRPDVISYTNVIWGLCRSNCREDGVILLERMISAGIVPSIATWSVLINCFILDDIVRAHDQFTI.

PPR repeat units follow at residues 75–109 (TPLT…GFHC), 110–144 (SEDL…GCDP), 145–179 (SVKI…GFEP), 180–214 (NVFT…GCCP), 215–243 (DAVS…ERFE), 245–279 (VVSV…GISP), 280–314 (NVIS…GCHP), 315–350 (NIYT…GLQP), 351–385 (NVVA…GCSP), 386–420 (NIRT…GCCP), 421–455 (NVVV…NCAP), 456–490 (SVPT…HRCP), 492–526 (NIVT…GVEW), 527–561 (SSST…GKSP), 562–598 (DEIT…KWRP), and 599–633 (DVIS…GIVP).

The protein belongs to the PPR family. P subfamily.

The polypeptide is Pentatricopeptide repeat-containing protein At3g48810 (Arabidopsis thaliana (Mouse-ear cress)).